The sequence spans 136 residues: Transcription antitermination protein NusB (136 aa).

This sequence belongs to the NusB family.

In terms of biological role, involved in transcription antitermination. Required for transcription of ribosomal RNA (rRNA) genes. Binds specifically to the boxA antiterminator sequence of the ribosomal RNA (rrn) operons. The chain is Transcription antitermination protein NusB from Pseudarthrobacter chlorophenolicus (strain ATCC 700700 / DSM 12829 / CIP 107037 / JCM 12360 / KCTC 9906 / NCIMB 13794 / A6) (Arthrobacter chlorophenolicus).